The primary structure comprises 38 residues: Potassium channel toxin alpha-KTx 3.2 (38 aa).

3 cysteine pairs are disulfide-bonded: cysteine 8/cysteine 28, cysteine 14/cysteine 33, and cysteine 18/cysteine 35.

It belongs to the short scorpion toxin superfamily. Potassium channel inhibitor family. Alpha-KTx 03 subfamily. In terms of tissue distribution, expressed by the venom gland.

It is found in the secreted. Potent inhibitor of the Shaker potassium channels and its mammalian homologs (Kv1.1/KCNA1, Kv1.3/KCNA3, Kv1.6/KCNA6) (Ki&lt;1 nM for all channels). Also blocks Kv1.2/KCNA2 (IC(50)=26.8 nM). It also shows a weak interaction with nicotinic acetylcholine receptors (nAChR), suggesting it may weakly inhibit it. In Leiurus hebraeus (Hebrew deathstalker scorpion), this protein is Potassium channel toxin alpha-KTx 3.2.